We begin with the raw amino-acid sequence, 743 residues long: POU domain, class 2, transcription factor 1 (743 aa).

Residues 1 to 11 (MNNPSETSKPS) are compositionally biased toward polar residues. Disordered stretches follow at residues 1–34 (MNNP…QPVP), 67–95 (SLNV…SVQA), 258–283 (ATPI…EEPS), and 357–381 (SSDS…RRRK). Low complexity predominate over residues 81–95 (SQQPSQPSQQPSVQA). 2 positions are modified to phosphothreonine: T270 and T276. Residues 280–354 (EEPSDLEELE…LLEKWLNDAE (75 aa)) form the POU-specific domain. Phosphoserine is present on S283. Positions 357 to 371 (SSDSSLSSPSALNSP) are enriched in low complexity. The segment at residues 379–438 (RRKKRTSIETNIRVALEKSFLENQKPTSEEITMIADQLNMEKEVIRVWFCNRRQKEKRIN) is a DNA-binding region (homeobox). Phosphoserine is present on residues S385 and S448. The span at 494–504 (VTGTSDTTSNN) shows a compositional bias: polar residues. The disordered stretch occupies residues 494 to 557 (VTGTSDTTSN…TTSTPLSSPL (64 aa)). The segment covering 505 to 557 (TATVISTAPPASSAVTSPSLSPSPSASASTSEASSASETSTTQTTSTPLSSPL) has biased composition (low complexity).

This sequence belongs to the POU transcription factor family. Class-2 subfamily. As to quaternary structure, interacts with POU2AF1; the interaction increases POU2F1 transactivation activity. Interacts with NR3C1, AR, PGR and HCFC1. (Microbial infection) Associates with the herpes simplex virus VP16-induced complex; binding to HCFC1 activates the viral transcriptional activator VP16 for association with POU2F1, to form a multiprotein-DNA complex responsible for activating transcription of the viral immediate early genes. In terms of assembly, (Microbial infection) Interacts with human herpesvirus 8 (KSHV) protein RTA/ORF50; this interaction enhances RTA/ORF50-mediated transactivation of several viral promoters including K-bZIP promoter. Post-translationally, phosphorylated by PRKDC. In terms of tissue distribution, ubiquitous. Isoform 2 is lymphocyte-specific.

It is found in the nucleus. In terms of biological role, transcription factor that binds to the octamer motif (5'-ATTTGCAT-3') and activates the promoters of the genes for some small nuclear RNAs (snRNA) and of genes such as those for histone H2B and immunoglobulins. Modulates transcription transactivation by NR3C1, AR and PGR. Functionally, (Microbial infection) In case of human herpes simplex virus (HSV) infection, POU2F1 forms a multiprotein-DNA complex with the viral transactivator protein VP16 and HCFC1 thereby enabling the transcription of the viral immediate early genes. The chain is POU domain, class 2, transcription factor 1 (POU2F1) from Homo sapiens (Human).